The primary structure comprises 239 residues: Ribosomal RNA small subunit methyltransferase G (239 aa).

S-adenosyl-L-methionine contacts are provided by residues G78, F83, 129–130 (AE), and R148.

It belongs to the methyltransferase superfamily. RNA methyltransferase RsmG family.

The protein localises to the cytoplasm. In terms of biological role, specifically methylates the N7 position of a guanine in 16S rRNA. This Clostridium tetani (strain Massachusetts / E88) protein is Ribosomal RNA small subunit methyltransferase G.